The chain runs to 127 residues: DNA-directed RNA polymerase subunit omega (127 aa).

Belongs to the RNA polymerase subunit omega family. In terms of assembly, the RNAP catalytic core consists of 2 alpha, 1 beta, 1 beta' and 1 omega subunit. When a sigma factor is associated with the core the holoenzyme is formed, which can initiate transcription.

It catalyses the reaction RNA(n) + a ribonucleoside 5'-triphosphate = RNA(n+1) + diphosphate. Functionally, promotes RNA polymerase assembly. Latches the N- and C-terminal regions of the beta' subunit thereby facilitating its interaction with the beta and alpha subunits. This Rickettsia typhi (strain ATCC VR-144 / Wilmington) protein is DNA-directed RNA polymerase subunit omega.